Here is a 781-residue protein sequence, read N- to C-terminus: uncharacterized protein (781 aa).

The interval 1–34 is disordered; that stretch reads MNIAEEPSDEVISSGPEDTDICSQQTSASAEAGD. Phosphoserine is present on serine 29. 2 consecutive RRM domains span residues 195-273 and 295-418; these read GNIF…YHVE and RCLF…KAVQ. Residues 345–375 are disordered; that stretch reads SNTRSSSSVSFNEEGSVESNKSSNNTNGNAQ. Positions 347–364 are enriched in low complexity; that stretch reads TRSSSSVSFNEEGSVESN. The span at 365–374 shows a compositional bias: polar residues; the sequence is KSSNNTNGNA. A phosphoserine mark is found at serine 433, serine 435, serine 482, and serine 485. Threonine 486 carries the post-translational modification Phosphothreonine. Serine 501 is subject to Phosphoserine. One can recognise an RRM 3 domain in the interval 540–638; sequence SNLYVKHIPL…QVLSVSFAQK (99 aa). Residues 640-668 form a disordered region; the sequence is GNLSSSDDDDQSQTDNSSKFQNFQPHNDY.

Interacts with RBG1.

This is an uncharacterized protein from Saccharomyces cerevisiae (strain ATCC 204508 / S288c) (Baker's yeast).